A 340-amino-acid polypeptide reads, in one-letter code: Phosphoribosylformylglycinamidine cyclo-ligase (340 aa).

It belongs to the AIR synthase family.

It is found in the cytoplasm. It catalyses the reaction 2-formamido-N(1)-(5-O-phospho-beta-D-ribosyl)acetamidine + ATP = 5-amino-1-(5-phospho-beta-D-ribosyl)imidazole + ADP + phosphate + H(+). Its pathway is purine metabolism; IMP biosynthesis via de novo pathway; 5-amino-1-(5-phospho-D-ribosyl)imidazole from N(2)-formyl-N(1)-(5-phospho-D-ribosyl)glycinamide: step 2/2. The protein is Phosphoribosylformylglycinamidine cyclo-ligase of Streptococcus pyogenes serotype M12 (strain MGAS2096).